The primary structure comprises 334 residues: HTH-type transcriptional repressor PurR (334 aa).

The HTH lacI-type domain occupies 2–56 (ATIKDVARLAGVSTTTVSHVINKTRFVAEATQEKVNKAVDELNYAPSAVARSLKC). The H-T-H motif DNA-binding region spans 4–23 (IKDVARLAGVSTTTVSHVIN). Residues 48-56 (SAVARSLKC) mediate DNA binding. 4 residues coordinate hypoxanthine: Phe73, Lys189, Phe220, and Asp274.

As to quaternary structure, homodimer.

It functions in the pathway purine metabolism; purine nucleotide biosynthesis [regulation]. Its function is as follows. Is the main repressor of the genes involved in the de novo synthesis of purine nucleotides, regulating purB, purC, purEK, purF, purHD, purL, purMN and guaBA expression. PurR is allosterically activated to bind its cognate DNA by binding the purine corepressors, hypoxanthine or guanine, thereby effecting transcription repression. The chain is HTH-type transcriptional repressor PurR from Vibrio atlanticus (strain LGP32) (Vibrio splendidus (strain Mel32)).